The following is a 92-amino-acid chain: UPF0223 protein SUB0967 (92 aa).

Belongs to the UPF0223 family.

The protein is UPF0223 protein SUB0967 of Streptococcus uberis (strain ATCC BAA-854 / 0140J).